The primary structure comprises 178 residues: Epididymal-specific lipocalin-9 (178 aa).

A signal peptide spans 1-16 (MVLLLVLGLVLSLATA). N46, N68, and N129 each carry an N-linked (GlcNAc...) asparagine glycan. A disulfide bridge links C83 with C176.

It belongs to the calycin superfamily. Lipocalin family. Expressed in epididymis. Not detected in all other tissues tested.

It localises to the secreted. This is Epididymal-specific lipocalin-9 (Lcn9) from Mus musculus (Mouse).